Reading from the N-terminus, the 551-residue chain is Protein ROOT HAIR SPECIFIC 17 (551 aa).

A helical; Signal-anchor for type II membrane protein transmembrane segment spans residues 39-59 (LFPLVSAVSGCLLLILFSFST). Residues N109 and N153 are each glycosylated (N-linked (GlcNAc...) asparagine). 293-295 (HLR) is a binding site for substrate. N405 and N465 each carry an N-linked (GlcNAc...) asparagine glycan. Residues 515 to 539 (KAKHVNEDDSSEYSEIGNVPISSRS) are disordered.

Belongs to the glycosyltransferase GT106 family. In terms of tissue distribution, specifically expressed in the root hair.

Its subcellular location is the membrane. It functions in the pathway glycan metabolism. The protein is Protein ROOT HAIR SPECIFIC 17 of Arabidopsis thaliana (Mouse-ear cress).